A 336-amino-acid chain; its full sequence is Polyprenyl transferase dpasC (336 aa).

A helical transmembrane segment spans residues 34-54 (LFTIFAGGMFLFVASFPTTAF). Asn-66 is a glycosylation site (N-linked (GlcNAc...) asparagine). 7 helical membrane-spanning segments follow: residues 80-100 (ALCL…NDWI), 125-145 (QAML…HFML), 181-201 (YILG…IFHG), 205-225 (FAES…WTIF), 253-273 (HVHL…PMYL), 274-294 (NQFH…LSLL), and 311-331 (LHVD…IELL).

The protein belongs to the UbiA prenyltransferase family. It depends on Mg(2+) as a cofactor.

It localises to the membrane. It functions in the pathway secondary metabolite biosynthesis; terpenoid biosynthesis. Its function is as follows. Polyprenyl transferase; part of the gene cluster that mediates the biosynthesis of the diterpenoid pyrones subglutinols A and B. The first step of the pathway is the synthesis of the alpha-pyrone moiety by the polyketide synthase dpasA via condensation of one acetyl-CoA starter unit with 3 malonyl-CoA units and 2 methylations. The alpha-pyrone is then combined with geranylgeranyl pyrophosphate (GGPP) formed by the GGPP synthase dpasD through the action of the prenyltransferase dpasC to yield a linear alpha-pyrone diterpenoid. Subsequent steps in the diterpenoid pyrone biosynthetic pathway involve the decalin core formation, which is initiated by the epoxidation of the C10-C11 olefin by the FAD-dependent oxidoreductase dpasE, and is followed by a cyclization cascade catalyzed by the terpene cyclase dpasB. The FAD-linked oxidoreductase dpasF is then involved in tetrahydrofuran (THF) ring formation at the C5 unit to complete the formation of subglutinols A and B. DpasF possesses also an additional catalytic ability of multi-step oxidations to generate a new DDP analog with an enone system at the C5 named FDDP A. This Apiospora sacchari (Arthrinium sacchari) protein is Polyprenyl transferase dpasC.